A 1140-amino-acid chain; its full sequence is Squamosa promoter-binding-like protein 15 (1140 aa).

2 disordered regions span residues 73–112 (RVNA…LNLQ) and 124–177 (DVSP…GGNS). Composition is skewed to low complexity over residues 76 to 100 (AGLS…EALR) and 125 to 135 (VSPAATTVSSS). The segment covering 164-177 (ASGGGGGGGGGGNS) has biased composition (gly residues). An SBP-type zinc finger spans residues 184 to 261 (YPMCQVDDCR…AGHNRRRRKT (78 aa)). Residues C187, C192, C209, H212, C228, C231, H235, and C247 each coordinate Zn(2+). The short motif at 244 to 260 (KRSCRRRLAGHNRRRRK) is the Bipartite nuclear localization signal element. Disordered stretches follow at residues 327–382 (NNGN…ADGF), 403–472 (TSNP…TPPY), 496–517 (LSSE…PVTH), and 558–597 (KDSE…DGQD). The span at 345-375 (ASHSQQQDSVQRTTNGFEKQTNGLDKQTNGF) shows a compositional bias: polar residues. Over residues 403–430 (TSNPDSNTSQSQGSSDSSGNNKSKSQST) the composition is skewed to low complexity. The span at 450-466 (RKNDALERSPEMYKQPD) shows a compositional bias: basic and acidic residues. Positions 496-514 (LSSESSNPLDERSPSSSPP) are enriched in polar residues. Low complexity predominate over residues 579-593 (TSTSCSDHSPSTSNS).

Expressed in stems, leaf sheaths, and young panicles.

The protein localises to the nucleus. Functionally, trans-acting factor that binds specifically to the consensus nucleotide sequence 5'-TNCGTACAA-3'. The polypeptide is Squamosa promoter-binding-like protein 15 (SPL15) (Oryza sativa subsp. indica (Rice)).